The chain runs to 160 residues: Cytochrome b6-f complex subunit 4 (160 aa).

A run of 4 helical transmembrane segments spans residues 36 to 56 (LLYI…GLAV), 68 to 88 (PFAT…FQIL), 95 to 115 (FFGV…PFLE), and 131 to 151 (SVFL…VLPI).

Belongs to the cytochrome b family. PetD subfamily. As to quaternary structure, the 4 large subunits of the cytochrome b6-f complex are cytochrome b6, subunit IV (17 kDa polypeptide, petD), cytochrome f and the Rieske protein, while the 4 small subunits are petG, petL, petM and petN. The complex functions as a dimer.

Its subcellular location is the plastid. The protein resides in the chloroplast thylakoid membrane. Functionally, component of the cytochrome b6-f complex, which mediates electron transfer between photosystem II (PSII) and photosystem I (PSI), cyclic electron flow around PSI, and state transitions. This is Cytochrome b6-f complex subunit 4 from Welwitschia mirabilis (Tree tumbo).